Reading from the N-terminus, the 103-residue chain is Small ribosomal subunit protein uS10 (103 aa).

The protein belongs to the universal ribosomal protein uS10 family. In terms of assembly, part of the 30S ribosomal subunit.

Involved in the binding of tRNA to the ribosomes. The sequence is that of Small ribosomal subunit protein uS10 from Idiomarina loihiensis (strain ATCC BAA-735 / DSM 15497 / L2-TR).